Here is a 282-residue protein sequence, read N- to C-terminus: 40S small subunit processome assembly factor 1 (282 aa).

Disordered stretches follow at residues 27–98 and 121–143; these read YDLG…SEVP and FHSR…NKTK. A compositionally biased stretch (basic and acidic residues) spans 48–59; the sequence is KRDSETVADRAA. Residues S67 and S75 each carry the phosphoserine modification. A compositionally biased stretch (low complexity) spans 89–98; that stretch reads SAPAAPSEVP. Basic and acidic residues predominate over residues 131-143; sequence KSEEDKPAKNKTK. K173 is modified (N6-acetyllysine). The segment covering 208–226 has biased composition (basic and acidic residues); that stretch reads EKRTSMEEEKRAAQETDIF. A disordered region spans residues 208–254; the sequence is EKRTSMEEEKRAAQETDIFKRKKRKGRSQEDRRSKKLAPSILSSGRA. S268 bears the Phosphoserine mark.

As to quaternary structure, part of the small subunit (SSU) processome, composed of more than 70 proteins and the RNA chaperone small nucleolar RNA (snoRNA) U3.

It is found in the chromosome. The protein localises to the nucleus. The protein resides in the nucleolus. Its function is as follows. Part of the small subunit (SSU) processome, first precursor of the small eukaryotic ribosomal subunit. During the assembly of the SSU processome in the nucleolus, many ribosome biogenesis factors, an RNA chaperone and ribosomal proteins associate with the nascent pre-rRNA and work in concert to generate RNA folding, modifications, rearrangements and cleavage as well as targeted degradation of pre-ribosomal RNA by the RNA exosome. Prevents helicase DHX37 to be recruited before post-A1 state. The protein is 40S small subunit processome assembly factor 1 of Rattus norvegicus (Rat).